Reading from the N-terminus, the 526-residue chain is tRNA-2-methylthio-N(6)-dimethylallyladenosine synthase (526 aa).

The tract at residues Met-1 to Glu-24 is disordered. Residues Arg-28 to His-144 form the MTTase N-terminal domain. Positions 37, 73, 107, 181, 185, and 188 each coordinate [4Fe-4S] cluster. The 237-residue stretch at Arg-167–Glu-403 folds into the Radical SAM core domain. Residues Gln-406–Val-477 form the TRAM domain.

It belongs to the methylthiotransferase family. MiaB subfamily. In terms of assembly, monomer. It depends on [4Fe-4S] cluster as a cofactor.

The protein localises to the cytoplasm. The catalysed reaction is N(6)-dimethylallyladenosine(37) in tRNA + (sulfur carrier)-SH + AH2 + 2 S-adenosyl-L-methionine = 2-methylsulfanyl-N(6)-dimethylallyladenosine(37) in tRNA + (sulfur carrier)-H + 5'-deoxyadenosine + L-methionine + A + S-adenosyl-L-homocysteine + 2 H(+). Its function is as follows. Catalyzes the methylthiolation of N6-(dimethylallyl)adenosine (i(6)A), leading to the formation of 2-methylthio-N6-(dimethylallyl)adenosine (ms(2)i(6)A) at position 37 in tRNAs that read codons beginning with uridine. This is tRNA-2-methylthio-N(6)-dimethylallyladenosine synthase from Corynebacterium glutamicum (strain R).